We begin with the raw amino-acid sequence, 1113 residues long: Protein MGA2 (1113 aa).

The disordered stretch occupies residues 91-114 (TPLEEEMESNRALKEEEEDEHENK). S255 bears the Phosphoserine mark. 2 stretches are compositionally biased toward polar residues: residues 344-357 (DTTK…SSRR) and 437-452 (HIPS…SESF). 2 disordered regions span residues 344–376 (DTTK…NNQL) and 437–462 (HIPS…NDNP). S467 carries the post-translational modification Phosphoserine. Positions 530–610 (PSINRVIPSQ…NENNNDDLPQ (81 aa)) constitute an IPT/TIG domain. The disordered stretch occupies residues 658–687 (IVGNDSPDSGTNGNSCSKSTGPSPNQHSMN). Positions 663-687 (SPDSGTNGNSCSKSTGPSPNQHSMN) are enriched in polar residues. 2 ANK repeats span residues 719 to 748 (LGRT…RVND) and 752 to 781 (FGLT…NYSL). Residues 1037–1054 (MLIFFWIPLTLLLLTWFI) traverse the membrane as a helical segment.

It is found in the membrane. This is Protein MGA2 (MGA2) from Saccharomyces cerevisiae (strain ATCC 204508 / S288c) (Baker's yeast).